Reading from the N-terminus, the 415-residue chain is Lipid-A-disaccharide synthase (415 aa).

Residues 1–21 are disordered; sequence MNSLPESGSDGQSSADPSQKA.

It belongs to the LpxB family.

The catalysed reaction is a lipid X + a UDP-2-N,3-O-bis[(3R)-3-hydroxyacyl]-alpha-D-glucosamine = a lipid A disaccharide + UDP + H(+). It participates in bacterial outer membrane biogenesis; LPS lipid A biosynthesis. Its function is as follows. Condensation of UDP-2,3-diacylglucosamine and 2,3-diacylglucosamine-1-phosphate to form lipid A disaccharide, a precursor of lipid A, a phosphorylated glycolipid that anchors the lipopolysaccharide to the outer membrane of the cell. This chain is Lipid-A-disaccharide synthase, found in Gluconobacter oxydans (strain 621H) (Gluconobacter suboxydans).